A 175-amino-acid chain; its full sequence is Ribosome maturation factor RimM (175 aa).

One can recognise a PRC barrel domain in the interval 93-167; that stretch reads DDEFYYSDLI…YIIITLPEVI (75 aa).

It belongs to the RimM family. Binds ribosomal protein uS19.

It localises to the cytoplasm. An accessory protein needed during the final step in the assembly of 30S ribosomal subunit, possibly for assembly of the head region. Essential for efficient processing of 16S rRNA. May be needed both before and after RbfA during the maturation of 16S rRNA. It has affinity for free ribosomal 30S subunits but not for 70S ribosomes. The polypeptide is Ribosome maturation factor RimM (Ehrlichia chaffeensis (strain ATCC CRL-10679 / Arkansas)).